The sequence spans 735 residues: Lebercilin-like protein (735 aa).

2 disordered regions span residues 12 to 54 (TEAH…NGSV) and 91 to 115 (EKPLAKAKEKRKYNAGKLPQPRGQK). The span at 43–53 (QSQNSQASNGS) shows a compositional bias: low complexity. Residues 205–335 (TAKHQNEVKN…QQKLKEKDRE (131 aa)) adopt a coiled-coil conformation. Disordered stretches follow at residues 356 to 379 (YPKVSSTKSVQADRKSLPSVNMRH), 473 to 597 (SKEV…PRKH), 632 to 657 (KHRSEQELRLEPAGYEPSFGKGAGAR), and 685 to 735 (GRAG…KTVV). Residues 487-525 (TPRRPKENKEDQEKRAIPAEAEPTAKESEAHKDAEDKAL) are compositionally biased toward basic and acidic residues. A compositionally biased stretch (low complexity) spans 528 to 541 (AAGNAGDAGDAGDA). Composition is skewed to basic and acidic residues over residues 542 to 553 (GNDREVVGEHKV), 573 to 588 (EVHGAGEAPRDVEPGR), and 632 to 641 (KHRSEQELRL). Positions 689 to 707 (SSDSEAVSKSPQTGPQASA) are enriched in polar residues.

The protein belongs to the LCA5 family.

In Mus musculus (Mouse), this protein is Lebercilin-like protein.